The following is a 495-amino-acid chain: NADH-ubiquinone oxidoreductase chain 4 (495 aa).

The next 12 helical transmembrane spans lie at Y9–I29, L39–F59, I89–W109, E118–D138, F173–F193, I214–H234, P245–L265, F272–I292, I335–L355, Y367–A387, L413–Y433, and V457–F477.

It belongs to the complex I subunit 4 family. As to quaternary structure, complex I is composed of at least 49 different subunits.

It localises to the mitochondrion inner membrane. It carries out the reaction a ubiquinone + NADH + 5 H(+)(in) = a ubiquinol + NAD(+) + 4 H(+)(out). Functionally, core subunit of the mitochondrial membrane respiratory chain NADH dehydrogenase (Complex I) that is believed to belong to the minimal assembly required for catalysis. Complex I functions in the transfer of electrons from NADH to the respiratory chain. The immediate electron acceptor for the enzyme is believed to be ubiquinone. In Arabidopsis thaliana (Mouse-ear cress), this protein is NADH-ubiquinone oxidoreductase chain 4 (ND4).